We begin with the raw amino-acid sequence, 465 residues long: Cysteine--tRNA ligase (465 aa).

Residue Cys30 coordinates Zn(2+). The 'HIGH' region motif lies at 32–42 (ITVYDYCHVGH). Positions 214, 239, and 243 each coordinate Zn(2+). The 'KMSKS' region motif lies at 271-275 (KMSKS). Lys274 is an ATP binding site.

This sequence belongs to the class-I aminoacyl-tRNA synthetase family. As to quaternary structure, monomer. Requires Zn(2+) as cofactor.

The protein resides in the cytoplasm. It catalyses the reaction tRNA(Cys) + L-cysteine + ATP = L-cysteinyl-tRNA(Cys) + AMP + diphosphate. This is Cysteine--tRNA ligase from Burkholderia ambifaria (strain ATCC BAA-244 / DSM 16087 / CCUG 44356 / LMG 19182 / AMMD) (Burkholderia cepacia (strain AMMD)).